A 128-amino-acid polypeptide reads, in one-letter code: Sulfurtransferase TusD (128 aa).

The active-site Cysteine persulfide intermediate is the Cys78.

Belongs to the DsrE/TusD family. As to quaternary structure, heterohexamer, formed by a dimer of trimers. The hexameric TusBCD complex contains 2 copies each of TusB, TusC and TusD. The TusBCD complex interacts with TusE.

It is found in the cytoplasm. Its function is as follows. Part of a sulfur-relay system required for 2-thiolation of 5-methylaminomethyl-2-thiouridine (mnm(5)s(2)U) at tRNA wobble positions. Accepts sulfur from TusA and transfers it in turn to TusE. This is Sulfurtransferase TusD from Escherichia coli O139:H28 (strain E24377A / ETEC).